We begin with the raw amino-acid sequence, 156 residues long: MSRKKRYFKTVILNDPKFGSYIIAKFINYIMNNGKKNLAQKIFYYSISIISIRLNKNPFILIKKILYNVQPNFEIKKKKIGGSFYKIPIKINLKRSLMFSMKWIVKNSKLRNENGYKNKLVGELIDSYYNNSLSTKQKDELNKIIDQNKAYSNFKI.

This sequence belongs to the universal ribosomal protein uS7 family. In terms of assembly, part of the 30S ribosomal subunit. Contacts proteins S9 and S11.

Its function is as follows. One of the primary rRNA binding proteins, it binds directly to 16S rRNA where it nucleates assembly of the head domain of the 30S subunit. Is located at the subunit interface close to the decoding center, probably blocks exit of the E-site tRNA. The polypeptide is Small ribosomal subunit protein uS7 (Carsonella ruddii (strain PV)).